The following is a 383-amino-acid chain: Paralemmin-1 (383 aa).

An N-acetylmethionine modification is found at methionine 1. Residues 5–102 (ATDTASQQER…KEIDVLEFGE (98 aa)) adopt a coiled-coil conformation. Disordered regions lie at residues 51-163 (RERW…GSTM), 242-295 (TLSE…GQEP), and 334-375 (ATPR…MKKP). Positions 69 to 96 (DMRKQMQEDEQKARGLEESITRLEKEID) are enriched in basic and acidic residues. Polar residues-rich tracts occupy residues 109-124 (KENS…QSAS) and 133-143 (ETLVNAQQTPL). Residues serine 116, serine 122, and serine 124 each carry the phosphoserine modification. Phosphothreonine is present on residues threonine 141, threonine 145, and threonine 153. A phosphoserine mark is found at serine 157 and serine 161. Position 242 is a phosphothreonine (threonine 242). Serine 244 carries the phosphoserine modification. The segment covering 257–273 (GLAEDVTRTTPSRREIT) has biased composition (basic and acidic residues). Over residues 285–295 (GPPGIQPGQEP) the composition is skewed to low complexity. Serine 345 is modified (phosphoserine). A compositionally biased stretch (polar residues) spans 357–367 (QTGPTTTPSDT). A phosphothreonine mark is found at threonine 361, threonine 362, and threonine 363. Serine 365 carries the post-translational modification Phosphoserine. Threonine 367 carries the phosphothreonine modification. 2 S-palmitoyl cysteine lipidation sites follow: cysteine 377 and cysteine 379. A Cysteine methyl ester modification is found at cysteine 380. Cysteine 380 is lipidated: S-farnesyl cysteine. The propeptide at 381–383 (SVM) is removed in mature form.

The protein belongs to the paralemmin family. In terms of assembly, interacts with dopamine receptor DRD3. Expression is highest in brain, intermediate in adrenal gland and kidney, and much lower or undetectable in other tissues. Isoform 1 is the predominant isoform in most tissues except brain and kidney where isoform 2 predominates.

It is found in the cell membrane. The protein localises to the cell projection. The protein resides in the filopodium membrane. Its subcellular location is the axon. It localises to the dendrite. It is found in the dendritic spine. The protein localises to the basolateral cell membrane. The protein resides in the apicolateral cell membrane. In terms of biological role, involved in plasma membrane dynamics and cell process formation. Isoform 1 and isoform 2 are necessary for axonal and dendritic filopodia induction, for dendritic spine maturation and synapse formation in a palmitoylation-dependent manner. This chain is Paralemmin-1 (Palm), found in Mus musculus (Mouse).